A 128-amino-acid chain; its full sequence is Small ribosomal subunit protein uS11 (128 aa).

It belongs to the universal ribosomal protein uS11 family. As to quaternary structure, part of the 30S ribosomal subunit. Interacts with proteins S7 and S18. Binds to IF-3.

In terms of biological role, located on the platform of the 30S subunit, it bridges several disparate RNA helices of the 16S rRNA. Forms part of the Shine-Dalgarno cleft in the 70S ribosome. This Methylococcus capsulatus (strain ATCC 33009 / NCIMB 11132 / Bath) protein is Small ribosomal subunit protein uS11.